The primary structure comprises 1854 residues: PKS-NRPS hybrid synthetase ATPKS (1854 aa).

The interval 24–423 (FDQTQTRYSP…GRADTQIKIR (400 aa)) is adenylation (A) domain. The Carrier 1 domain maps to 523–598 (IPASTLTQQL…NLAAYLSDQT (76 aa)). Ser558 bears the O-(pantetheine 4'-phosphoryl)serine mark. A Ketosynthase family 3 (KS3) domain is found at 617–1049 (GEDIAVISMA…GTNAHAIIEE (433 aa)). Catalysis depends on for beta-ketoacyl synthase activity residues Cys791, His926, and His967. The segment at 1162–1496 (LFSGQGTERA…SLSDLHIRKV (335 aa)) is malonyl-CoA:ACP transacylase (MAT) domain. The tract at residues 1536-1556 (KSSGQPSGQSPSGCPQPTGQI) is disordered. Positions 1537 to 1555 (SSGQPSGQSPSGCPQPTGQ) are enriched in low complexity. The 76-residue stretch at 1776 to 1851 (MMLQGLVRGI…SLSDALQKQV (76 aa)) folds into the Carrier 2 domain. Position 1811 is an O-(pantetheine 4'-phosphoryl)serine (Ser1811).

In the C-terminal section; belongs to the NRP synthetase family.

The protein operates within secondary metabolite biosynthesis. Its function is as follows. PKS-NRPS hybrid synthetase; part of the gene cluster that mediates the biosynthesis of pyrophen and campyrone B, which represent a class of fungal amino acid-derived alpha-pyrone natural products. The first step of pyrophen biosynthesis is catalyzed by the PKS-NRPS hybrid synthetase ATPKS that uptakes and condensates L-phenylalanine and malonyl-CoA in order to produce desmethyldesacetylpyrophen. Although the A domain does not discriminate between 2 enantiomeric phenylalanines, the downstream KS domain must play a gate keeping role to stereoselectively accept the L-phenylalanyl-S-phosphopantetheine (Ppant)-T domain intermediate for chain elongation. The resulting amino acid derived diketide is off-loaded through lactonization to yield the alpha-pyrone intermediate desmethyldesacetylpyrophen. The cluster-specific O-methyltransferase (OMT) then methylates desmethyldesacetylpyrophen to desacetylpyrophen, which is further acetylated to pyrophen by an endogenous yet unidentified N-acetyltransferase. ATPKS has relaxed substrate specificity to activate and extend branched-chain amino acid L-leucine to produce small amounts of campyrone B. This Aspergillus niger (strain ATCC 1015 / CBS 113.46 / FGSC A1144 / LSHB Ac4 / NCTC 3858a / NRRL 328 / USDA 3528.7) protein is PKS-NRPS hybrid synthetase ATPKS.